The chain runs to 141 residues: Single-stranded DNA-binding protein 2 (141 aa).

The region spanning M1–E104 is the SSB domain. The tract at residues E104–F141 is disordered. Positions N107 to N127 are enriched in low complexity.

In terms of assembly, homotetramer.

In Staphylococcus aureus (strain Mu50 / ATCC 700699), this protein is Single-stranded DNA-binding protein 2 (ssb-p).